The sequence spans 487 residues: MHVTPELAPVAKVGGLADVVFGLGRELEIRGNHVEIILPKYDCMRYDQIWGLQRTFDDLWVPWYGGAIHCSVYFGFVHGRKCFFIEPHSQDNFFNRGAVYGFHDDIFRFAFFSRAAMEFLWKAGKNPDIIHCHDWQTALVPVYLYEIYQPMGMRHPRVCFTIHNFKHQGVTGAQVLHASGLDRPEYYFHYDRLRDNHNPHAINLMKGGIVYANFVTTVSPRYAMEAKDQGQGFGLEPTLHIHHMKYGGVVNGIDYDVWNPEIDPHIPVHFNVDTIEGKYADKKALRDRLLLADNEKPIVSFVGRLDPQKGIELIRHALFYTLGQGGQFVLLGSSPDGAINGYFWGLKRQFNDNPDCHLEIGYNEELAHLVYAGSDVMVVPSRFEPCGLTQLIAMRYGTIPVVREIGGLADTVIDKDFSHRPLHERNGYVFRDYDERGLESALGRAIACYYQYPDHFRELMKNAMRYDYSWNHPGQDYLNIYHYIRDK.

Lys-12 contacts ADP-alpha-D-glucose.

Belongs to the glycosyltransferase 1 family. Bacterial/plant glycogen synthase subfamily.

The enzyme catalyses [(1-&gt;4)-alpha-D-glucosyl](n) + ADP-alpha-D-glucose = [(1-&gt;4)-alpha-D-glucosyl](n+1) + ADP + H(+). The protein operates within glycan biosynthesis; glycogen biosynthesis. Functionally, synthesizes alpha-1,4-glucan chains using ADP-glucose. This is Glycogen synthase 2 from Methylococcus capsulatus (strain ATCC 33009 / NCIMB 11132 / Bath).